The sequence spans 430 residues: Probable aspartic-type endopeptidase TRV_06366 (430 aa).

A signal peptide spans 1 to 17 (MHVSTLLVAVLLPLALS). Residues 18-87 (KPTPRKKTSS…SKATAGSGKE (70 aa)) constitute a propeptide, activation peptide. The interval 61-104 (HEMEGYHPQPISKLPGNSKATAGSGKEGVESQDEKGEVVNNPTD) is disordered. Over residues 87–104 (EGVESQDEKGEVVNNPTD) the composition is skewed to basic and acidic residues. The Peptidase A1 domain maps to 109–427 (FLSPVTIGGQ…DQRGPSISLA (319 aa)). Residue D125 is part of the active site. The N-linked (GlcNAc...) asparagine glycan is linked to N306. D314 is a catalytic residue.

The protein belongs to the peptidase A1 family.

It is found in the secreted. Its function is as follows. Probable secreted aspartic-type endopeptidase which contributes to virulence. This Trichophyton verrucosum (strain HKI 0517) protein is Probable aspartic-type endopeptidase TRV_06366.